The following is a 181-amino-acid chain: ATP synthase subunit delta (181 aa).

It belongs to the ATPase delta chain family. F-type ATPases have 2 components, F(1) - the catalytic core - and F(0) - the membrane proton channel. F(1) has five subunits: alpha(3), beta(3), gamma(1), delta(1), epsilon(1). F(0) has three main subunits: a(1), b(2) and c(10-14). The alpha and beta chains form an alternating ring which encloses part of the gamma chain. F(1) is attached to F(0) by a central stalk formed by the gamma and epsilon chains, while a peripheral stalk is formed by the delta and b chains.

It is found in the cell membrane. In terms of biological role, f(1)F(0) ATP synthase produces ATP from ADP in the presence of a proton or sodium gradient. F-type ATPases consist of two structural domains, F(1) containing the extramembraneous catalytic core and F(0) containing the membrane proton channel, linked together by a central stalk and a peripheral stalk. During catalysis, ATP synthesis in the catalytic domain of F(1) is coupled via a rotary mechanism of the central stalk subunits to proton translocation. Its function is as follows. This protein is part of the stalk that links CF(0) to CF(1). It either transmits conformational changes from CF(0) to CF(1) or is implicated in proton conduction. The sequence is that of ATP synthase subunit delta from Clostridium kluyveri (strain NBRC 12016).